An 82-amino-acid polypeptide reads, in one-letter code: Sec-independent protein translocase protein TatA (82 aa).

Residues 1-21 (MLGFGPFELILIVVIIALLFG) traverse the membrane as a helical segment. Positions 36–47 (IKEFKQEMHEPS) are enriched in basic and acidic residues. Positions 36-82 (IKEFKQEMHEPSPPRPQVTDIPSQRLDPVTGAPVSTESTVPASDRRS) are disordered.

This sequence belongs to the TatA/E family. As to quaternary structure, forms a complex with TatC.

It localises to the cell membrane. In terms of biological role, part of the twin-arginine translocation (Tat) system that transports large folded proteins containing a characteristic twin-arginine motif in their signal peptide across membranes. TatA could form the protein-conducting channel of the Tat system. This is Sec-independent protein translocase protein TatA from Deinococcus deserti (strain DSM 17065 / CIP 109153 / LMG 22923 / VCD115).